The primary structure comprises 542 residues: Serine/threonine-protein phosphatase 2A regulatory subunit pptr-1 (542 aa).

Disordered stretches follow at residues 1–28 (MHGS…TGGQ) and 500–542 (DYLK…PAKK). Over residues 528–542 (KKSSTGSETTTPAKK) the composition is skewed to polar residues.

The protein belongs to the phosphatase 2A regulatory subunit B56 family. As to quaternary structure, part of a complex consisting of a common heterodimeric core enzyme, composed of catalytic subunit let-92 and constant regulatory subunit paa-1, that associates with a variety of regulatory subunits which confer distinct properties to the holoenzyme. Interacts with akt-1 but not akt-2. Interacts with sgk-1. Interacts with P granule components meg-1, meg-3 and meg-4. In terms of tissue distribution, expressed in pharynx, vulva and spermatheca.

It is found in the cytoplasm. Functionally, probable regulatory subunit of serine/threonine-protein phosphatase let-92 which negatively regulates the insulin receptor signaling cascade composed of daf-2, age-1, akt-1, akt-2 and sgk-1 by promoting the dephosphorylation of akt-1 on 'Thr-350'. Negatively regulates several functions controlled by the insulin pathway including dauer formation, lifespan, fat storage and stress resistance. Plays a role in the asymmetric segregation of the P granule components during embryonic cell divisions but does not play an essential role in specifying germ cell fate. Within a PP2A phosphatase complex, acts redundantly with pptr-2, to dephosphorylate P granule components including meg-1 and meg-3 to promote the assembly and accumulation of zygotic P granules in the posterior cytoplasm during zygote polarization, and thus maintain P granule distribution and segregation in early stage embryos following meiosis. In adults, required to promote germ cell proliferation and differentiation when exposed to thermic stress. This Caenorhabditis elegans protein is Serine/threonine-protein phosphatase 2A regulatory subunit pptr-1.